The primary structure comprises 437 residues: GTPase Era, mitochondrial (437 aa).

Residues 1–43 (MAAPSWRGARLVQSVLRVWQVGPHVARERVIPFSSLLGFQRRC) constitute a mitochondrion transit peptide. The region spanning 112-330 (RVLRVVLLGA…QYLLTQAQPG (219 aa)) is the Era-type G domain. Residues 120-127 (GAPNAGKS) form a G1 region. 120–127 (GAPNAGKS) contributes to the GTP binding site. The G2 stretch occupies residues 146–150 (HTTRC). The tract at residues 167 to 170 (DTPG) is G3. 167-171 (DTPGI) lines the GTP pocket. Ser-173 carries the post-translational modification Phosphoserine. 236–239 (NKVD) provides a ligand contact to GTP. The G4 stretch occupies residues 236–239 (NKVD). Residues 271-290 (HSHPGTHCPSPAVKDPNTQS) are disordered. Residues 308–310 (LSA) form a G5 region. The KH type-2 domain occupies 360-437 (LPQEVPYNVQ…DIRLSVKLLK (78 aa)).

Belongs to the TRAFAC class TrmE-Era-EngA-EngB-Septin-like GTPase superfamily. Era GTPase family.

It is found in the mitochondrion matrix. Its subcellular location is the mitochondrion inner membrane. Functionally, probable GTPase that plays a role in the mitochondrial ribosomal small subunit assembly. Specifically binds the 12S mitochondrial rRNA (12S mt-rRNA) to a 33 nucleotide section delineating the 3' terminal stem-loop region. May act as a chaperone that protects the 12S mt-rRNA on the 28S mitoribosomal subunit during ribosomal small subunit assembly. This Homo sapiens (Human) protein is GTPase Era, mitochondrial (ERAL1).